Here is a 336-residue protein sequence, read N- to C-terminus: 3-isopropylmalate dehydrogenase (336 aa).

Substrate-binding residues include R87, R97, R121, and D211. Residues D211, D235, and D239 each contribute to the Mg(2+) site. 271 to 283 (GSAPDIAGQGIAD) is a binding site for NAD(+).

This sequence belongs to the isocitrate and isopropylmalate dehydrogenases family. LeuB type 2 subfamily. As to quaternary structure, homodimer. The cofactor is Mg(2+). It depends on Mn(2+) as a cofactor.

The protein resides in the cytoplasm. The enzyme catalyses (2R,3S)-3-isopropylmalate + NAD(+) = 4-methyl-2-oxopentanoate + CO2 + NADH. Its pathway is amino-acid biosynthesis; L-leucine biosynthesis; L-leucine from 3-methyl-2-oxobutanoate: step 3/4. Catalyzes the oxidation of 3-carboxy-2-hydroxy-4-methylpentanoate (3-isopropylmalate) to 3-carboxy-4-methyl-2-oxopentanoate. The product decarboxylates to 4-methyl-2 oxopentanoate. The sequence is that of 3-isopropylmalate dehydrogenase from Mycolicibacterium paratuberculosis (strain ATCC BAA-968 / K-10) (Mycobacterium paratuberculosis).